We begin with the raw amino-acid sequence, 904 residues long: Exo-beta-D-glucosaminidase (904 aa).

The N-terminal stretch at 1-32 is a signal peptide; it reads MFHRPASVRRFVTTAVALGLLSTLSTGARAGA. The tract at residues 28–49 is disordered; that stretch reads ARAGARTHEPPPRPTTVSSTAG. D476 serves as the catalytic Proton donor. E545 acts as the Nucleophile in catalysis. Residues 813–828 are compositionally biased toward low complexity; that stretch reads STTAGTDGASTTTVTV. The segment at 813–833 is disordered; sequence STTAGTDGASTTTVTVRNTGS.

Belongs to the glycosyl hydrolase 2 family. In terms of assembly, monomer.

It is found in the secreted. The catalysed reaction is Hydrolysis of chitosan or chitosan oligosaccharides to remove successive D-glucosamine residues from the non-reducing termini.. Functionally, hydrolyzes chitosan and chitooligosaccharides with retention of anomeric configuration. Has no beta-mannosidase activity. The sequence is that of Exo-beta-D-glucosaminidase from Streptomyces avermitilis (strain ATCC 31267 / DSM 46492 / JCM 5070 / NBRC 14893 / NCIMB 12804 / NRRL 8165 / MA-4680).